The following is a 170-amino-acid chain: Small ribosomal subunit protein uS5 (170 aa).

An S5 DRBM domain is found at 11–74 (ILEKLVHINR…ETARRVLIHV (64 aa)).

The protein belongs to the universal ribosomal protein uS5 family. Part of the 30S ribosomal subunit. Contacts proteins S4 and S8.

In terms of biological role, with S4 and S12 plays an important role in translational accuracy. Located at the back of the 30S subunit body where it stabilizes the conformation of the head with respect to the body. In Pelagibacter ubique (strain HTCC1062), this protein is Small ribosomal subunit protein uS5.